A 130-amino-acid chain; its full sequence is Protein TraH (130 aa).

The interval 1–78 is disordered; sequence MSEPKDQSIE…ALEENRRPKA (78 aa). Positions 37 to 54 are enriched in low complexity; the sequence is PEQATAGQPPAEATAPTP.

Functionally, the initiation process of transfer DNA synthesis requires the interaction of at least three plasmid-specific components (TraH, TraI, and TraJ) at the transfer origin resulting in the assembly of a specialized nucleoprotein complex - the relaxosome. The protein is Protein TraH (traH) of Escherichia coli.